We begin with the raw amino-acid sequence, 199 residues long: Large ribosomal subunit protein uL10 (199 aa).

The protein belongs to the universal ribosomal protein uL10 family. In terms of assembly, part of the ribosomal stalk of the 50S ribosomal subunit. The N-terminus interacts with L11 and the large rRNA to form the base of the stalk. The C-terminus forms an elongated spine to which L12 dimers bind in a sequential fashion forming a multimeric L10(L12)X complex.

Functionally, forms part of the ribosomal stalk, playing a central role in the interaction of the ribosome with GTP-bound translation factors. The chain is Large ribosomal subunit protein uL10 (rplJ) from Aquifex aeolicus (strain VF5).